Here is a 463-residue protein sequence, read N- to C-terminus: uncharacterized protein (463 aa).

This is an uncharacterized protein from Lepidoptera (butterflies and moths).